A 411-amino-acid chain; its full sequence is Probable 26S proteasome regulatory subunit rpn-6.2 (411 aa).

Positions Tyr-212 to Gly-381 constitute a PCI domain.

It belongs to the proteasome subunit S9 family. In terms of assembly, component of the lid subcomplex of the 19S proteasome regulatory particle complex (also named PA700 complex). The 26S proteasome consists of a 20S proteasome core and two 19S regulatory subunits.

In terms of biological role, component of the lid subcomplex of the 26S proteasome, a multiprotein complex involved in the ATP-dependent degradation of ubiquitinated proteins. In the complex, rpn-6.2 is required for proteasome assembly. This Caenorhabditis briggsae protein is Probable 26S proteasome regulatory subunit rpn-6.2.